Reading from the N-terminus, the 416-residue chain is METSSLWPPRPSPSAGLSLEARLGVDTRLWAKVLFTALYSLIFALGTAGNALSVHVVLKARAGRPGRLRYHVLSLALSALLLLLISVPMELYNFVWSHYPWVFGDLGCRGYYFVRELCAYATVLSVASLSAERCLAVCQPLRARRLLTPRRTRRLLSLVWVASLGLALPMAVIMGQKHEMERADGEPEPASRVCTVLVSRATLQVFIQVNVLVSFVLPLALTAFLNGITVNHLVALYSQVPSASAQVNSIPSRLELLSEEGLLGFITWRKTLSLGVQASLVRHKDASQIRSLQHSAQVLRAIVAVYVICWLPYHARRLMYCYIPDDGWTDELYDFYHYFYMVTNTLFYVSSAVTPVLYNAVSSSFRKLFLESLSSLCGEQRSVVPLPQEAPESTTSTYSFRLWGSPRNPSLGEIQV.

The Extracellular portion of the chain corresponds to 1 to 32; it reads METSSLWPPRPSPSAGLSLEARLGVDTRLWAK. A helical membrane pass occupies residues 33–55; that stretch reads VLFTALYSLIFALGTAGNALSVH. Over 56–64 the chain is Cytoplasmic; sequence VVLKARAGR. Residues 65 to 87 traverse the membrane as a helical segment; it reads PGRLRYHVLSLALSALLLLLISV. Residues 88–109 are Extracellular-facing; sequence PMELYNFVWSHYPWVFGDLGCR. A disulfide bond links Cys-108 and Cys-194. Residues 110–131 traverse the membrane as a helical segment; it reads GYYFVRELCAYATVLSVASLSA. Topologically, residues 132 to 154 are cytoplasmic; that stretch reads ERCLAVCQPLRARRLLTPRRTRR. A helical membrane pass occupies residues 155–176; the sequence is LLSLVWVASLGLALPMAVIMGQ. Residues 177 to 217 lie on the Extracellular side of the membrane; the sequence is KHEMERADGEPEPASRVCTVLVSRATLQVFIQVNVLVSFVL. A helical membrane pass occupies residues 218–237; the sequence is PLALTAFLNGITVNHLVALY. Residues 238–297 are Cytoplasmic-facing; the sequence is SQVPSASAQVNSIPSRLELLSEEGLLGFITWRKTLSLGVQASLVRHKDASQIRSLQHSAQ. A helical membrane pass occupies residues 298–318; sequence VLRAIVAVYVICWLPYHARRL. Over 319 to 337 the chain is Extracellular; the sequence is MYCYIPDDGWTDELYDFYH. Residues 338-358 form a helical membrane-spanning segment; sequence YFYMVTNTLFYVSSAVTPVLY. Residues 359–416 are Cytoplasmic-facing; that stretch reads NAVSSSFRKLFLESLSSLCGEQRSVVPLPQEAPESTTSTYSFRLWGSPRNPSLGEIQV. Residue Cys-377 is the site of S-palmitoyl cysteine attachment. Ser-410 is modified (phosphoserine).

It belongs to the G-protein coupled receptor 1 family. Neurotensin receptor subfamily. NTSR2 sub-subfamily. In terms of tissue distribution, expressed maximally in the cerebellum, hippocampus, piriform cortex and neocortex of adult brain.

It localises to the cell membrane. Receptor for the tridecapeptide neurotensin. It is associated with G proteins that activate a phosphatidylinositol-calcium second messenger system. The protein is Neurotensin receptor type 2 (Ntsr2) of Mus musculus (Mouse).